The following is an 89-amino-acid chain: Large ribosomal subunit protein bL27 (89 aa).

Positions 1 to 22 (MAHKKGASSSRNGRDSNAQRLG) are disordered. Polar residues predominate over residues 7–19 (ASSSRNGRDSNAQ).

The protein belongs to the bacterial ribosomal protein bL27 family.

The sequence is that of Large ribosomal subunit protein bL27 from Cutibacterium acnes (strain DSM 16379 / KPA171202) (Propionibacterium acnes).